A 523-amino-acid polypeptide reads, in one-letter code: 2-isopropylmalate synthase (523 aa).

Positions 5–267 constitute a Pyruvate carboxyltransferase domain; that stretch reads VIIFDTTLRD…ETGINAKEIH (263 aa). The Mn(2+) site is built by D14, H202, H204, and N238. The segment at 392–523 is regulatory domain; sequence KLQQLVVHSD…QQNKRELGGV (132 aa).

It belongs to the alpha-IPM synthase/homocitrate synthase family. LeuA type 1 subfamily. In terms of assembly, homodimer. Mn(2+) is required as a cofactor.

Its subcellular location is the cytoplasm. The catalysed reaction is 3-methyl-2-oxobutanoate + acetyl-CoA + H2O = (2S)-2-isopropylmalate + CoA + H(+). The protein operates within amino-acid biosynthesis; L-leucine biosynthesis; L-leucine from 3-methyl-2-oxobutanoate: step 1/4. Functionally, catalyzes the condensation of the acetyl group of acetyl-CoA with 3-methyl-2-oxobutanoate (2-ketoisovalerate) to form 3-carboxy-3-hydroxy-4-methylpentanoate (2-isopropylmalate). This is 2-isopropylmalate synthase from Shewanella pealeana (strain ATCC 700345 / ANG-SQ1).